The sequence spans 142 residues: Large ribosomal subunit protein uL16 (142 aa).

The protein belongs to the universal ribosomal protein uL16 family. In terms of assembly, part of the 50S ribosomal subunit.

Functionally, binds 23S rRNA and is also seen to make contacts with the A and possibly P site tRNAs. The polypeptide is Large ribosomal subunit protein uL16 (Thermotoga neapolitana (strain ATCC 49049 / DSM 4359 / NBRC 107923 / NS-E)).